Consider the following 183-residue polypeptide: ATP synthase subunit b, chloroplastic (183 aa).

Residues 27–49 traverse the membrane as a helical segment; that stretch reads LATNLINLTVVVGVLIFFGKGVL.

Belongs to the ATPase B chain family. In terms of assembly, F-type ATPases have 2 components, F(1) - the catalytic core - and F(0) - the membrane proton channel. F(1) has five subunits: alpha(3), beta(3), gamma(1), delta(1), epsilon(1). F(0) has four main subunits: a(1), b(1), b'(1) and c(10-14). The alpha and beta chains form an alternating ring which encloses part of the gamma chain. F(1) is attached to F(0) by a central stalk formed by the gamma and epsilon chains, while a peripheral stalk is formed by the delta, b and b' chains.

It is found in the plastid. It localises to the chloroplast thylakoid membrane. F(1)F(0) ATP synthase produces ATP from ADP in the presence of a proton or sodium gradient. F-type ATPases consist of two structural domains, F(1) containing the extramembraneous catalytic core and F(0) containing the membrane proton channel, linked together by a central stalk and a peripheral stalk. During catalysis, ATP synthesis in the catalytic domain of F(1) is coupled via a rotary mechanism of the central stalk subunits to proton translocation. Its function is as follows. Component of the F(0) channel, it forms part of the peripheral stalk, linking F(1) to F(0). In Brachypodium distachyon (Purple false brome), this protein is ATP synthase subunit b, chloroplastic.